The chain runs to 173 residues: ATP synthase subunit delta (173 aa).

Belongs to the ATPase delta chain family. As to quaternary structure, F-type ATPases have 2 components, F(1) - the catalytic core - and F(0) - the membrane proton channel. F(1) has five subunits: alpha(3), beta(3), gamma(1), delta(1), epsilon(1). F(0) has three main subunits: a(1), b(2) and c(10-14). The alpha and beta chains form an alternating ring which encloses part of the gamma chain. F(1) is attached to F(0) by a central stalk formed by the gamma and epsilon chains, while a peripheral stalk is formed by the delta and b chains.

It is found in the cell inner membrane. Its function is as follows. F(1)F(0) ATP synthase produces ATP from ADP in the presence of a proton or sodium gradient. F-type ATPases consist of two structural domains, F(1) containing the extramembraneous catalytic core and F(0) containing the membrane proton channel, linked together by a central stalk and a peripheral stalk. During catalysis, ATP synthesis in the catalytic domain of F(1) is coupled via a rotary mechanism of the central stalk subunits to proton translocation. In terms of biological role, this protein is part of the stalk that links CF(0) to CF(1). It either transmits conformational changes from CF(0) to CF(1) or is implicated in proton conduction. This chain is ATP synthase subunit delta, found in Campylobacter lari (strain RM2100 / D67 / ATCC BAA-1060).